Consider the following 140-residue polypeptide: MSTLHVDIVSAEQAIHSGEAKMLVAPAREGDIGITPRHAPLLTKLRPGEVRVQDENGEERFFYVSGGIIEVQPHKVTVLADTAARARDLDEAAAQEAKRRAEEALANRKAGEDYSHVQAELAEAMAQLQTLERLRRRAKR.

It belongs to the ATPase epsilon chain family. F-type ATPases have 2 components, CF(1) - the catalytic core - and CF(0) - the membrane proton channel. CF(1) has five subunits: alpha(3), beta(3), gamma(1), delta(1), epsilon(1). CF(0) has three main subunits: a, b and c.

It is found in the cell inner membrane. Its function is as follows. Produces ATP from ADP in the presence of a proton gradient across the membrane. This chain is ATP synthase epsilon chain, found in Alkalilimnicola ehrlichii (strain ATCC BAA-1101 / DSM 17681 / MLHE-1).